A 240-amino-acid polypeptide reads, in one-letter code: Cysteine-rich venom protein catrin (240 aa).

The N-terminal stretch at 1–19 is a signal peptide; the sequence is MIAFIVLPILAAVLQQSSG. Positions 38 to 166 constitute an SCP domain; sequence VDLHNFLRRS…KYSYFYVCQY (129 aa). Cystine bridges form between Cys75–Cys153, Cys92–Cys167, Cys148–Cys164, Cys186–Cys193, Cys189–Cys198, Cys202–Cys235, Cys211–Cys229, and Cys220–Cys233. The region spanning 202–235 is the ShKT domain; that stretch reads CTKEDKYTNCKSLVQQAGCQDKQMQSDCPAICFC.

The protein belongs to the CRISP family. Expressed by the venom gland.

It is found in the secreted. In terms of biological role, catrin-2 weakly blocks contraction of smooth muscle elicited by high potassium-induced depolarization, but does not block caffeine-stimulated contraction. Catrin-1 has no significant effect. May target voltage-gated calcium channels on smooth muscle. The protein is Cysteine-rich venom protein catrin of Crotalus atrox (Western diamondback rattlesnake).